The chain runs to 136 residues: Large ribosomal subunit protein uL16 (136 aa).

This sequence belongs to the universal ribosomal protein uL16 family. As to quaternary structure, part of the 50S ribosomal subunit.

Functionally, binds 23S rRNA and is also seen to make contacts with the A and possibly P site tRNAs. This Glaesserella parasuis serovar 5 (strain SH0165) (Haemophilus parasuis) protein is Large ribosomal subunit protein uL16.